The sequence spans 142 residues: Large ribosomal subunit protein uL13 (142 aa).

The protein belongs to the universal ribosomal protein uL13 family. Part of the 50S ribosomal subunit.

This protein is one of the early assembly proteins of the 50S ribosomal subunit, although it is not seen to bind rRNA by itself. It is important during the early stages of 50S assembly. In Akkermansia muciniphila (strain ATCC BAA-835 / DSM 22959 / JCM 33894 / BCRC 81048 / CCUG 64013 / CIP 107961 / Muc), this protein is Large ribosomal subunit protein uL13.